The primary structure comprises 235 residues: MKKLSKRMAALSTKIEDRIYAPLEALSIIKENANAKFDETIEAHIRLGIDPKYTDQQLRTTVALPHGTGQSIKIAVITSGENVSKAKAAGADLFGEEDLVESINKGNMEFDLLIATPDMMPKVAKLGRVLGPRGLMPNPKAGTVTNDIANAIKEFKAGKLEFRADKAGIVHVRFGKASFTKEALFDNLKTLQESIDKNKPSGAKGKYWKTFYVTSTMGPSVQVDINAVQDYQPEG.

Belongs to the universal ribosomal protein uL1 family. As to quaternary structure, part of the 50S ribosomal subunit.

Binds directly to 23S rRNA. The L1 stalk is quite mobile in the ribosome, and is involved in E site tRNA release. Its function is as follows. Protein L1 is also a translational repressor protein, it controls the translation of the L11 operon by binding to its mRNA. The chain is Large ribosomal subunit protein uL1 from Prochlorococcus marinus (strain MIT 9301).